The sequence spans 198 residues: NAD(P)H dehydrogenase (quinone) (198 aa).

Residues 4–189 (ILVLYYSMYG…SIARYQGEYV (186 aa)) enclose the Flavodoxin-like domain. Residues 10-15 (SMYGHI) and 78-80 (TRF) each bind FMN. Tyr-12 lines the NAD(+) pocket. Trp-98 contacts substrate. FMN-binding positions include 113-118 (STGTGG) and His-133.

Belongs to the WrbA family. FMN serves as cofactor.

It carries out the reaction a quinone + NADH + H(+) = a quinol + NAD(+). It catalyses the reaction a quinone + NADPH + H(+) = a quinol + NADP(+). This Salmonella agona (strain SL483) protein is NAD(P)H dehydrogenase (quinone).